The following is a 215-amino-acid chain: Protein FAM27D1 (215 aa).

Residues 74–172 (QPKTHTHTGM…RGTQADLSSR (99 aa)) are disordered. Positions 87–108 (THRERERNTQRLRDRERRENGR) are enriched in basic and acidic residues. Positions 109-122 (HTHRHTHTLTHTHT) are enriched in basic residues. 2 stretches are compositionally biased toward basic and acidic residues: residues 123 to 139 (HRDT…ETHT) and 149 to 162 (SAHD…REQP). A compositionally biased stretch (polar residues) spans 163–172 (RGTQADLSSR).

The protein belongs to the FAM27 family.

This Homo sapiens (Human) protein is Protein FAM27D1 (FAM27D1).